Consider the following 392-residue polypeptide: Probable glycerol-3-phosphate dehydrogenase 2 (392 aa).

Residues 42–47 (GSGNWG), phenylalanine 130, lysine 153, and alanine 196 each bind NAD(+). Lysine 153 lines the substrate pocket. Lysine 248 serves as the catalytic Proton acceptor. NAD(+)-binding residues include arginine 312 and glutamine 341. 312 to 313 (RN) is a binding site for substrate.

The protein belongs to the NAD-dependent glycerol-3-phosphate dehydrogenase family. As to quaternary structure, homodimer.

It is found in the cytoplasm. The catalysed reaction is sn-glycerol 3-phosphate + NAD(+) = dihydroxyacetone phosphate + NADH + H(+). The polypeptide is Probable glycerol-3-phosphate dehydrogenase 2 (gpdh-2) (Caenorhabditis elegans).